Here is a 1072-residue protein sequence, read N- to C-terminus: DNA-directed RNA polymerase subunit beta (1072 aa).

It belongs to the RNA polymerase beta chain family. As to quaternary structure, in plastids the minimal PEP RNA polymerase catalytic core is composed of four subunits: alpha, beta, beta', and beta''. When a (nuclear-encoded) sigma factor is associated with the core the holoenzyme is formed, which can initiate transcription.

The protein localises to the plastid. It is found in the chloroplast. The enzyme catalyses RNA(n) + a ribonucleoside 5'-triphosphate = RNA(n+1) + diphosphate. Functionally, DNA-dependent RNA polymerase catalyzes the transcription of DNA into RNA using the four ribonucleoside triphosphates as substrates. The chain is DNA-directed RNA polymerase subunit beta from Arabis hirsuta (Hairy rock-cress).